Consider the following 116-residue polypeptide: uncharacterized protein (116 aa).

The protein belongs to the BolA/IbaG family.

It is found in the mitochondrion. This is an uncharacterized protein from Schizosaccharomyces pombe (strain 972 / ATCC 24843) (Fission yeast).